The primary structure comprises 51 residues: Protein YrhD (51 aa).

The sequence is that of Protein YrhD (yrhD) from Escherichia coli (strain K12).